The primary structure comprises 1073 residues: Guanylyl cyclase C (1073 aa).

Residues 1–23 form the signal peptide; it reads MKTLLLDLALWSLLFQPGWLSFS. The Extracellular portion of the chain corresponds to 24–430; sequence SQVSQNCHNG…PNDITGRGPQ (407 aa). Residues asparagine 32, asparagine 75, asparagine 79, asparagine 195, asparagine 284, asparagine 307, asparagine 345, and asparagine 402 are each glycosylated (N-linked (GlcNAc...) asparagine). The helical transmembrane segment at 431 to 454 threads the bilayer; the sequence is ILMIAVFTLTGAVVLLLLVALLML. The Cytoplasmic segment spans residues 455 to 1073; the sequence is RKYRKDYELR…NTTDKESTYF (619 aa). The Protein kinase domain occupies 489–749; sequence LKIDDDKRRD…KIETTLAKIF (261 aa). Positions 824–954 constitute a Guanylate cyclase domain; that stretch reads TIYFSDIVGF…DTVNTASRME (131 aa).

The protein belongs to the adenylyl cyclase class-4/guanylyl cyclase family. In terms of assembly, homotrimer. Interacts via its C-terminal region with NHERF4. Interacts with the lectin chaperone VIP36. In terms of processing, glycosylation at Asn-75 and/or Asn-79 is required for interaction with VIP36 while glycosylation at Asn-345 and Asn-402 modulates ligand-mediated GUCY2C activation.

The protein localises to the cell membrane. The protein resides in the endoplasmic reticulum membrane. It carries out the reaction GTP = 3',5'-cyclic GMP + diphosphate. In terms of biological role, guanylyl cyclase that catalyzes synthesis of cyclic GMP (cGMP) from GTP. Receptor for the E.coli heat-stable enterotoxin; E.coli enterotoxin markedly stimulates the accumulation of cGMP in mammalian cells expressing GUCY2C. Also activated by the endogenous peptides guanylin and uroguanylin. In Homo sapiens (Human), this protein is Guanylyl cyclase C.